The sequence spans 260 residues: Flavin-dependent thymidylate synthase (260 aa).

The 202-residue stretch at 1 to 202 folds into the ThyX domain; it reads MKIKLVSYSK…PRLFKYAGPN (202 aa). FAD-binding positions include Ser-55, 79-81, and Gln-87; that span reads RHR. DUMP contacts are provided by residues 76-79, 87-91, and Arg-141; these read QLVR and QMSHR. The short motif at 79-89 is the ThyX motif element; it reads RHRIASYTQMS. FAD-binding positions include 157 to 159 and Asn-163; that span reads NAR. Arg-168 contacts dUMP. The active-site Involved in ionization of N3 of dUMP, leading to its activation is Arg-168.

The protein belongs to the thymidylate synthase ThyX family. As to quaternary structure, homotetramer. The cofactor is FAD.

It carries out the reaction dUMP + (6R)-5,10-methylene-5,6,7,8-tetrahydrofolate + NADPH + H(+) = dTMP + (6S)-5,6,7,8-tetrahydrofolate + NADP(+). The protein operates within pyrimidine metabolism; dTTP biosynthesis. Its function is as follows. Catalyzes the reductive methylation of 2'-deoxyuridine-5'-monophosphate (dUMP) to 2'-deoxythymidine-5'-monophosphate (dTMP) while utilizing 5,10-methylenetetrahydrofolate (mTHF) as the methyl donor, and NADPH and FADH(2) as the reductant. The polypeptide is Flavin-dependent thymidylate synthase (Sulfolobus acidocaldarius (strain ATCC 33909 / DSM 639 / JCM 8929 / NBRC 15157 / NCIMB 11770)).